The following is a 1950-amino-acid chain: MSVADDDLGSLQGHIRRTLRSIHNLPYFRYTRGPTERADMSRALKEFIYRYLYFVISNSGENLPTLFNAHPKQKLSNPELTVFPDSLEDAVDIDKITSQQTIPFYKIDESRIGDVHKHTGRNCGRKFKIGEPLYRCHECGCDDTCVLCIHCFNPKDHVNHHVCTDICTEFTSGICDCGDEEAWNSPLHCKAEEQENDISEDPATNADIKEEDVWNDSVNIALVELVLAEVFDYFIDVFNQNIEPLPTIQKDITIKLREMTQQGKMYERAQFLNDLKYENDYMFDGTTTAKTSPSNSPEASPSLAKIDPENYTVIIYNDEYHNYSQATTALRQGVPDNVHIDLLTSRIDGEGRAMLKCSQDLSSVLGGFFAVQTNGLSATLTSWSEYLHQETCKYIILWITHCLNIPNSSFQTTFRNMMGKTLCSEYLNATECRDMTPVVEKYFSNKFDKNDPYRYIDLSILADGNQIPLGHHKILPESSTHSLSPLINDVETPTSRTYSNTRLQHILYFDNRYWKRLRKDIQNVIIPTLASSNLYKPIFCQQVVEIFNHITRSVAYMDREPQLTAIRECVVQLFTCPTNAKNIFENQSFLDIVWSIIDIFKEFCKVEGGVLIWQRVQKSNLTKSYSISFKQGLYTVETLLSKVHDPNIPLRPKEIISLLTLCKLFNGAWKIKRKEGEHVLHEDQNFISYLEYTTSIYSIIQTAEKVSEKSKDSIDSKLFLNAIRIISSFLGNRSLTYKLIYDSHEVIKFSVSHERVAFMNPLQTMLSFLIEKVSLKDAYEALEDCSDFLKISDFSLRSVVLCSQIDVGFWVRNGMSVLHQASYYKNNPELGSYSRDIHLNQLAILWERDDIPRIIYNILDRWELLDWFTGEVDYQHTVYEDKISFIIQQFIAFIYQILTERQYFKTFSSLKDRRMDQIKNSIIYNLYMKPLSYSKLLRSVPDYLTEDTTEFDEALEEVSVFVEPKGLADNGVFKLKASLYAKVDPLKLLNLENEFESSATIIKSHLAKDKDEIAKVVLIPQVSIKQLDKDALNLGAFTRNTVFAKVVYKLLQVCLDMEDSTFLNELLHLVHGIFRDDELINGKDSIPEAYLSKPICNLLLSIANAKSDVFSESIVRKADYLLEKMIMKKPNELFESLIASFGNQYVNDYKDKKLRQGVNLQETEKERKRRLAKKHQARLLAKFNNQQTKFMKEHESEFDEQDNDVDMVGEKVYESEDFTCALCQDSSSTDFFVIPAYHDHSPIFRPGNIFNPNEFMPMWDGFYNDDEKQAYIDDDVLEALKENGSCGSRKVFVSCNHHIHHNCFKRYVQKKRFSSNAFICPLCQTFSNCTLPLCQTSKANTGLSLDMFLESELSLDTLSRLFKPFTEENYRTINSIFSLMISQCQGFDKAVRKRANFSHKDVSLILSVHWANTISMLEIASRLEKPYSISFFRSREQKYKTLKNILVCIMLFTFVIGKPSMEFEPYPQQPDTVWNQNQLFQYIVRSALFSPVSLRQTVTEALTTFSRQFLRDFLQGLSDAEQVTKLYAKASKIGDVLKVSEQMLFALRTISDVRMEGLDSESIIYDLAYTFLLKSLLPTIRRCLVFIKVLHELVKDSENETLVINGHEVEEELEFEDTAEFVNKALKMITEKESLVDLLTTQESIVSHPYLENIPYEYCGIIKLIDLSKYLNTYVTQSKEIKLREERSQHMKNADNRLDFKICLTCGVKVHLRADRHEMTKHLNKNCFKPFGAFLMPNSSEVCLHLTQPPSNIFISAPYLNSHGEVGRNAMRRGDLTTLNLKRYEHLNRLWINNEIPGYISRVMGDEFRVTILSNGFLFAFNREPRPRRIPPTDEDDEDMEEGEDGFFTEGNDEMDVDDETGQAANLFGVGAEGIAGGGVRDFFQFFENFRNTLQPQGNGDDDAPQNPPPILQFLGPQFDGATIIRNTNPRNLDEDDSDDNDDSDEREIW.

Positions 118, 123, 136, 139, 148, 151, 157, 160, 161, 175, 177, and 189 each coordinate Zn(2+). The UBR-type zinc finger occupies 121 to 194; the sequence is RNCGRKFKIG…SPLHCKAEEQ (74 aa). S296 and S300 each carry phosphoserine. Residues 678–681 are ubiquitin-binding loop; sequence HVLH. A Zn(2+)-binding site is contributed by D952. The tract at residues 1165-1200 is UBC2-binding region (U2BR); that stretch reads KERKRRLAKKHQARLLAKFNNQQTKFMKEHESEFDE. C1220, C1223, C1295, H1297, H1300, C1303, C1320, and C1323 together coordinate Zn(2+). The segment at 1220–1324 adopts an RING-type; atypical zinc-finger fold; sequence CALCQDSSST…SNAFICPLCQ (105 aa). The interval 1333-1665 is cap helical domain (CHD); it reads LCQTSKANTG…YEYCGIIKLI (333 aa). 6 residues coordinate Zn(2+): C1703, C1706, H1722, C1727, H1763, and D1775. Disordered regions lie at residues 1826–1846 and 1893–1950; these read RPRR…GEDG and TLQP…REIW. Composition is skewed to acidic residues over residues 1833–1846 and 1934–1950; these read TDED…GEDG and DEDD…REIW. S1938 is modified (phosphoserine).

Belongs to the E3 ubiquitin-protein ligase UBR1-like family. In terms of assembly, interacts with UBC2. Interacts with RPN2, RPT1 and RPT6 from the 26S proteasome.

The catalysed reaction is S-ubiquitinyl-[E2 ubiquitin-conjugating enzyme]-L-cysteine + [acceptor protein]-L-lysine = [E2 ubiquitin-conjugating enzyme]-L-cysteine + N(6)-ubiquitinyl-[acceptor protein]-L-lysine.. Its pathway is protein modification; protein ubiquitination. In terms of biological role, ubiquitin ligase protein which is a component of the N-end rule pathway. Recognizes and binds to proteins bearing specific N-terminal residues that are destabilizing according to the N-end rule, leading to their ubiquitination and subsequent degradation. Recognizes both type-1 and type-2 N-degrons, containing positively charged amino acids (Arg, Lys and His) and bulky and hydrophobic amino acids, respectively. The sequence is that of E3 ubiquitin-protein ligase UBR1 from Saccharomyces cerevisiae (strain ATCC 204508 / S288c) (Baker's yeast).